The sequence spans 438 residues: GTPase Der (438 aa).

EngA-type G domains follow at residues 4–168 (PIVA…PAVP) and 176–351 (LKVA…EAAN). Residues 10–17 (GRPNVGKS), 57–61 (DTGGI), 120–123 (NKVE), 182–189 (GRPNVGKS), 229–233 (DTAGM), and 294–297 (NKWD) each bind GTP. The region spanning 352–436 (RRVATGTLNA…PIRLIFRRGR (85 aa)) is the KH-like domain.

This sequence belongs to the TRAFAC class TrmE-Era-EngA-EngB-Septin-like GTPase superfamily. EngA (Der) GTPase family. As to quaternary structure, associates with the 50S ribosomal subunit.

GTPase that plays an essential role in the late steps of ribosome biogenesis. The protein is GTPase Der of Moorella thermoacetica (strain ATCC 39073 / JCM 9320).